The sequence spans 317 residues: Ferrochelatase (317 aa).

H192 and E271 together coordinate Fe cation.

The protein belongs to the ferrochelatase family.

The protein resides in the cytoplasm. The catalysed reaction is heme b + 2 H(+) = protoporphyrin IX + Fe(2+). It functions in the pathway porphyrin-containing compound metabolism; protoheme biosynthesis; protoheme from protoporphyrin-IX: step 1/1. In terms of biological role, catalyzes the ferrous insertion into protoporphyrin IX. This Geobacter sp. (strain M21) protein is Ferrochelatase.